The sequence spans 81 residues: Photosystem I iron-sulfur center (81 aa).

2 4Fe-4S ferredoxin-type domains span residues 2–31 and 39–68; these read SHSVKVYDTCIGCTQCVRACPCDVLEMVAW and IASAPRTEDCIGCKRCETACPTDFLSVRVY. Positions 11, 14, 17, 21, 48, 51, 54, and 58 each coordinate [4Fe-4S] cluster.

As to quaternary structure, the eukaryotic PSI reaction center is composed of at least 11 subunits. It depends on [4Fe-4S] cluster as a cofactor.

The protein resides in the plastid. The protein localises to the chloroplast thylakoid membrane. It carries out the reaction reduced [plastocyanin] + hnu + oxidized [2Fe-2S]-[ferredoxin] = oxidized [plastocyanin] + reduced [2Fe-2S]-[ferredoxin]. Its function is as follows. Apoprotein for the two 4Fe-4S centers FA and FB of photosystem I (PSI); essential for photochemical activity. FB is the terminal electron acceptor of PSI, donating electrons to ferredoxin. The C-terminus interacts with PsaA/B/D and helps assemble the protein into the PSI complex. Required for binding of PsaD and PsaE to PSI. PSI is a plastocyanin/cytochrome c6-ferredoxin oxidoreductase, converting photonic excitation into a charge separation, which transfers an electron from the donor P700 chlorophyll pair to the spectroscopically characterized acceptors A0, A1, FX, FA and FB in turn. The chain is Photosystem I iron-sulfur center from Guillardia theta (Cryptophyte).